The primary structure comprises 84 residues: Cell division topological specificity factor (84 aa).

This sequence belongs to the MinE family.

Prevents the cell division inhibition by proteins MinC and MinD at internal division sites while permitting inhibition at polar sites. This ensures cell division at the proper site by restricting the formation of a division septum at the midpoint of the long axis of the cell. The chain is Cell division topological specificity factor from Pseudomonas putida (strain ATCC 700007 / DSM 6899 / JCM 31910 / BCRC 17059 / LMG 24140 / F1).